A 352-amino-acid polypeptide reads, in one-letter code: Selenide, water dikinase (352 aa).

Cys23 is an active-site residue. ATP is bound by residues Lys26 and 54-56; that span reads SRD. Residue Asp57 participates in Mg(2+) binding. Residues Asp74, Asp97, and 145–147 contribute to the ATP site; that span reads GHS. Asp97 lines the Mg(2+) pocket. Position 233 (Asp233) interacts with Mg(2+).

It belongs to the selenophosphate synthase 1 family. Class I subfamily. In terms of assembly, homodimer. Mg(2+) serves as cofactor.

It catalyses the reaction hydrogenselenide + ATP + H2O = selenophosphate + AMP + phosphate + 2 H(+). In terms of biological role, synthesizes selenophosphate from selenide and ATP. The protein is Selenide, water dikinase of Shewanella baltica (strain OS185).